Reading from the N-terminus, the 457-residue chain is tRNA modification GTPase MnmE (457 aa).

3 residues coordinate (6S)-5-formyl-5,6,7,8-tetrahydrofolate: arginine 25, glutamate 87, and arginine 126. In terms of domain architecture, TrmE-type G spans 223–377 (GISTAIIGRP…IEERINNLFF (155 aa)). Residue asparagine 233 coordinates K(+). GTP is bound by residues 233 to 238 (NVGKSS), 252 to 258 (TDIAGTT), and 277 to 280 (DTAG). Serine 237 provides a ligand contact to Mg(2+). K(+)-binding residues include threonine 252, isoleucine 254, and threonine 257. Mg(2+) is bound at residue threonine 258. Lysine 457 is a (6S)-5-formyl-5,6,7,8-tetrahydrofolate binding site.

It belongs to the TRAFAC class TrmE-Era-EngA-EngB-Septin-like GTPase superfamily. TrmE GTPase family. Homodimer. Heterotetramer of two MnmE and two MnmG subunits. Requires K(+) as cofactor.

Its subcellular location is the cytoplasm. Its function is as follows. Exhibits a very high intrinsic GTPase hydrolysis rate. Involved in the addition of a carboxymethylaminomethyl (cmnm) group at the wobble position (U34) of certain tRNAs, forming tRNA-cmnm(5)s(2)U34. The sequence is that of tRNA modification GTPase MnmE from Streptococcus pneumoniae serotype 4 (strain ATCC BAA-334 / TIGR4).